We begin with the raw amino-acid sequence, 432 residues long: Glutamyl-tRNA reductase (432 aa).

Residues threonine 49–arginine 52, serine 107, glutamate 112–glutamine 114, and glutamine 118 contribute to the substrate site. Cysteine 50 (nucleophile) is an active-site residue. Glycine 186–glycine 191 lines the NADP(+) pocket.

This sequence belongs to the glutamyl-tRNA reductase family. In terms of assembly, homodimer.

It catalyses the reaction (S)-4-amino-5-oxopentanoate + tRNA(Glu) + NADP(+) = L-glutamyl-tRNA(Glu) + NADPH + H(+). Its pathway is porphyrin-containing compound metabolism; protoporphyrin-IX biosynthesis; 5-aminolevulinate from L-glutamyl-tRNA(Glu): step 1/2. Functionally, catalyzes the NADPH-dependent reduction of glutamyl-tRNA(Glu) to glutamate 1-semialdehyde (GSA). The chain is Glutamyl-tRNA reductase from Campylobacter jejuni subsp. jejuni serotype O:23/36 (strain 81-176).